The primary structure comprises 548 residues: Chaperonin GroEL (548 aa).

Residues 30-33, K51, 87-91, G415, 479-481, and D495 contribute to the ATP site; these read TLGP, DGTTT, and NAA. The segment at 526-548 is disordered; sequence KEDKSSDLGSAPAGGMGGMGGMM. Over residues 537–548 the composition is skewed to gly residues; the sequence is PAGGMGGMGGMM.

Belongs to the chaperonin (HSP60) family. As to quaternary structure, forms a cylinder of 14 subunits composed of two heptameric rings stacked back-to-back. Interacts with the co-chaperonin GroES.

The protein resides in the cytoplasm. The enzyme catalyses ATP + H2O + a folded polypeptide = ADP + phosphate + an unfolded polypeptide.. Its function is as follows. Together with its co-chaperonin GroES, plays an essential role in assisting protein folding. The GroEL-GroES system forms a nano-cage that allows encapsulation of the non-native substrate proteins and provides a physical environment optimized to promote and accelerate protein folding. In Buchnera aphidicola subsp. Pterocomma populeum, this protein is Chaperonin GroEL.